We begin with the raw amino-acid sequence, 176 residues long: NAD(P)H-quinone oxidoreductase subunit 6, chloroplastic (176 aa).

A run of 5 helical transmembrane segments spans residues 10 to 30, 33 to 53, 61 to 81, 92 to 112, and 152 to 172; these read FLLV…VLLP, IFSA…YILA, AQLL…VMFM, LWTV…FSLI, and FFLP…GAIS.

The protein belongs to the complex I subunit 6 family. NDH is composed of at least 16 different subunits, 5 of which are encoded in the nucleus.

The protein resides in the plastid. The protein localises to the chloroplast thylakoid membrane. It carries out the reaction a plastoquinone + NADH + (n+1) H(+)(in) = a plastoquinol + NAD(+) + n H(+)(out). The catalysed reaction is a plastoquinone + NADPH + (n+1) H(+)(in) = a plastoquinol + NADP(+) + n H(+)(out). In terms of biological role, NDH shuttles electrons from NAD(P)H:plastoquinone, via FMN and iron-sulfur (Fe-S) centers, to quinones in the photosynthetic chain and possibly in a chloroplast respiratory chain. The immediate electron acceptor for the enzyme in this species is believed to be plastoquinone. Couples the redox reaction to proton translocation, and thus conserves the redox energy in a proton gradient. This is NAD(P)H-quinone oxidoreductase subunit 6, chloroplastic (ndhG) from Arabis hirsuta (Hairy rock-cress).